Reading from the N-terminus, the 485-residue chain is Subtilisin-like protease 1 (485 aa).

The N-terminal stretch at 1 to 19 (MGIFRFISISLAAVSAANA) is a signal peptide. Residues 20-116 (GHILSMGHAK…VEPDTTITIH (97 aa)) constitute a propeptide that is removed on maturation. The region spanning 34–116 (SYIVVMKDGT…VEPDTTITIH (83 aa)) is the Inhibitor I9 domain. The 275-residue stretch at 126–400 (SWGLARISSQ…NILINNGDAK (275 aa)) folds into the Peptidase S8 domain. Catalysis depends on charge relay system residues aspartate 158 and histidine 190. An N-linked (GlcNAc...) asparagine glycan is attached at asparagine 251. Serine 345 serves as the catalytic Charge relay system. Residues 377–394 (GTSSVTNPGPGTRTNILI) are compositionally biased toward polar residues. A disordered region spans residues 377-462 (GTSSVTNPGP…HTPFPNDDFN (86 aa)). The span at 409–418 (PSQPPKPSQP) shows a compositional bias: pro residues. Positions 419 to 428 (SKPQQPSEPQ) are enriched in low complexity. Residues 433–455 (PQEPAPGQPAPAPAPVPQHPHTP) show a composition bias toward pro residues.

This sequence belongs to the peptidase S8 family.

The protein localises to the secreted. Functionally, secreted subtilisin-like serine protease with keratinolytic activity that contributes to pathogenicity. In Arthroderma otae (strain ATCC MYA-4605 / CBS 113480) (Microsporum canis), this protein is Subtilisin-like protease 1 (SUB1).